The primary structure comprises 462 residues: MDRCIYGCSVITIFFSFFFLLNASALESGHHNITGSGQINSNSVLVALLDSRYTELAELVEKALLLQTLEDAVGRHNITIFAPRNEALERDLDPDFKRFLLQPGNLKSLQTLLLSHIIPKRVGSNQWPEENSGRVKHVTLGHDQVLHLSKLKGTNGKRLVNSAVITRPDDLTRPDGLIHGIERLLIPRSVQEDFNRRRNLRSISAVLPEGAPEIDPRTNRLKKSATAVSVPAGSPPVLPIESAMAPGPSLAPAPAPGPGGAHKHFNGDAQVKDFIHTLLHYGGYNEMADILVNLTSLATEMGRLVSEGYVLTVLAPNDEAMGKLTTDQLSEPGAPEQIMYYHIIPEYQTEESMYNSVRRFGKVKYETLRFPHKVGAKEADGSVKFGSGDRSAYLFDPDIYTDGRISVQGIDGVLFPEEKEEETVKKPTGPVKKVVQPRRGKLLEVACSMLGAIGKDSYLSRC.

The signal sequence occupies residues Met1–Ala25. Residues Asn32, Asn77, and Asn293 are each glycosylated (N-linked (GlcNAc...) asparagine). FAS1 domains follow at residues Asn40–Leu185 and Val271–Leu414.

It belongs to the fasciclin-like AGP family.

It localises to the secreted. May be a cell surface adhesion protein. The protein is Fasciclin-like arabinogalactan protein 18 (FLA18) of Arabidopsis thaliana (Mouse-ear cress).